The chain runs to 843 residues: Beta-mannosidase B (843 aa).

The Proton donor role is filled by Glu430. The N-linked (GlcNAc...) asparagine glycan is linked to Asn721.

The protein belongs to the glycosyl hydrolase 2 family. Beta-mannosidase B subfamily.

The enzyme catalyses Hydrolysis of terminal, non-reducing beta-D-mannose residues in beta-D-mannosides.. Its pathway is glycan metabolism; N-glycan degradation. Functionally, exoglycosidase that cleaves the single beta-linked mannose residue from the non-reducing end of beta-mannosidic oligosaccharides of various complexity and length. Prefers mannobiose over mannotriose and has no activity against polymeric mannan. Is also severely restricted by galactosyl substitutions at the +1 subsite. The chain is Beta-mannosidase B (mndB) from Aspergillus terreus (strain NIH 2624 / FGSC A1156).